The primary structure comprises 280 residues: Probable endonuclease 4 (280 aa).

The Zn(2+) site is built by His-68, His-108, Glu-143, Asp-177, His-180, His-214, Asp-227, His-229, and Glu-259.

The protein belongs to the AP endonuclease 2 family. It depends on Zn(2+) as a cofactor.

The catalysed reaction is Endonucleolytic cleavage to 5'-phosphooligonucleotide end-products.. In terms of biological role, endonuclease IV plays a role in DNA repair. It cleaves phosphodiester bonds at apurinic or apyrimidinic (AP) sites, generating a 3'-hydroxyl group and a 5'-terminal sugar phosphate. In Cenarchaeum symbiosum (strain A), this protein is Probable endonuclease 4.